The primary structure comprises 709 residues: Homeobox-leucine zipper protein TF1 (709 aa).

The homeobox DNA-binding region spans 66–125 (RKRRLQRLTGKQSEVLEGFFSICGHPDDGQKRHLSETTGLGLDQVKFWFQNKRTQVKTMC). A coiled-coil region spans residues 166–187 (NQLAVEMERLMGQSEWLQQEIA). One can recognise an START domain in the interval 212–441 (GQHDQQMIAE…MARQSARMRD (230 aa)).

This sequence belongs to the HD-ZIP homeobox family. Class IV subfamily.

The protein localises to the nucleus. Probable transcription factor. The polypeptide is Homeobox-leucine zipper protein TF1 (TF1) (Oryza sativa subsp. japonica (Rice)).